Reading from the N-terminus, the 63-residue chain is Large ribosomal subunit protein bL28 (63 aa).

Belongs to the bacterial ribosomal protein bL28 family.

The protein is Large ribosomal subunit protein bL28 of Mycoplasmopsis synoviae (strain 53) (Mycoplasma synoviae).